The primary structure comprises 390 residues: ATP phosphoribosyltransferase regulatory subunit (390 aa).

It belongs to the class-II aminoacyl-tRNA synthetase family. HisZ subfamily. Heteromultimer composed of HisG and HisZ subunits.

The protein resides in the cytoplasm. Its pathway is amino-acid biosynthesis; L-histidine biosynthesis; L-histidine from 5-phospho-alpha-D-ribose 1-diphosphate: step 1/9. Functionally, required for the first step of histidine biosynthesis. May allow the feedback regulation of ATP phosphoribosyltransferase activity by histidine. This chain is ATP phosphoribosyltransferase regulatory subunit, found in Nitrosomonas eutropha (strain DSM 101675 / C91 / Nm57).